Here is a 308-residue protein sequence, read N- to C-terminus: Phosphate transport system permease protein PstA 1 (308 aa).

Transmembrane regions (helical) follow at residues 36-56 (FFFTSFVVALIPLVWLLWVVI), 96-116 (AGVAAVLAVPLGLMTAVYLVE), 132-152 (VLAGVPSIVAALFVFSLWIAT), 155-175 (FQQSAFAVALALVLLMLPVVV), 204-224 (IVRIVAPIAMPGIVSGILLSI), and 276-296 (WGAALTLIIVVATINLAAAMI). One can recognise an ABC transmembrane type-1 domain in the interval 89–297 (LYGTLVQAGV…TINLAAAMIR (209 aa)).

This sequence belongs to the binding-protein-dependent transport system permease family. CysTW subfamily. The complex is composed of two ATP-binding proteins (PstB), two transmembrane proteins (PstC and PstA) and a solute-binding protein (PstS).

The protein localises to the cell membrane. Part of the binding-protein-dependent transport system for phosphate; probably responsible for the translocation of the substrate across the membrane. In Mycobacterium tuberculosis (strain ATCC 25618 / H37Rv), this protein is Phosphate transport system permease protein PstA 1 (pstA1).